An 874-amino-acid polypeptide reads, in one-letter code: Translation initiation factor IF-2 (874 aa).

The segment at 1-289 (MKIKNAQLTK…KHYDEHSVQR (289 aa)) is disordered. Residues 31–48 (SSSEKPTTKVPEKVAKEK) show a composition bias toward basic and acidic residues. Over residues 81 to 104 (RSSFASEDSTIPSPVSVDTESTAF) the composition is skewed to polar residues. Residues 105–118 (SPPVVEEVVSPLES) show a composition bias toward low complexity. 2 stretches are compositionally biased toward basic and acidic residues: residues 144 to 158 (PPKKEAELVVKKEPP) and 186 to 198 (PKKEDKPAPKERT). Positions 199-211 (GTVQTKPQQSSEV) are enriched in polar residues. The segment covering 228–260 (YRRDTSKRPGSDFRDRSKKDDSPKAFTGRDRYG) has biased composition (basic and acidic residues). Over residues 271–280 (RKKRVQKTKK) the composition is skewed to basic residues. Positions 380 to 549 (IRPPIVAFMG…ALQAEVLELK (170 aa)) constitute a tr-type G domain. Positions 389–396 (GHVDHGKT) are G1. 389–396 (GHVDHGKT) lines the GTP pocket. Residues 414 to 418 (AITQH) are G2. The segment at 435–438 (DTPG) is G3. GTP contacts are provided by residues 435–439 (DTPGH) and 489–492 (NKCD). The interval 489-492 (NKCD) is G4. The tract at residues 525–527 (SAK) is G5.

It belongs to the TRAFAC class translation factor GTPase superfamily. Classic translation factor GTPase family. IF-2 subfamily.

It localises to the cytoplasm. Functionally, one of the essential components for the initiation of protein synthesis. Protects formylmethionyl-tRNA from spontaneous hydrolysis and promotes its binding to the 30S ribosomal subunits. Also involved in the hydrolysis of GTP during the formation of the 70S ribosomal complex. The protein is Translation initiation factor IF-2 of Chlamydia abortus (strain DSM 27085 / S26/3) (Chlamydophila abortus).